A 610-amino-acid polypeptide reads, in one-letter code: UvrABC system protein C (610 aa).

The GIY-YIG domain maps to 19 to 97 (GAPGVYKMLD…IKRHKPRYNI (79 aa)). In terms of domain architecture, UVR spans 207-242 (EALIDRLAQRMEQAAQRLEFEKAARYRDQISNLRTV).

This sequence belongs to the UvrC family. In terms of assembly, interacts with UvrB in an incision complex.

Its subcellular location is the cytoplasm. In terms of biological role, the UvrABC repair system catalyzes the recognition and processing of DNA lesions. UvrC both incises the 5' and 3' sides of the lesion. The N-terminal half is responsible for the 3' incision and the C-terminal half is responsible for the 5' incision. This is UvrABC system protein C from Methylococcus capsulatus (strain ATCC 33009 / NCIMB 11132 / Bath).